Reading from the N-terminus, the 601-residue chain is Probable serine/threonine-protein kinase WNK3 (601 aa).

One can recognise a Protein kinase domain in the interval 34 to 291; sequence GRFNEILGKG…ARELLDDPFL (258 aa). Residues 114–117 and K164 each bind ATP; that span reads TELF. The Proton acceptor role is filled by D181. Disordered regions lie at residues 470–498 and 551–601; these read GWRP…PGGA and ADDD…SEQP. The span at 477–493 shows a compositional bias: acidic residues; it reads TDDDDDDDLVGGGDDPD. Residues 560–571 show a composition bias toward polar residues; sequence LQGSSSDTGGSN. Basic and acidic residues predominate over residues 572–583; that stretch reads HEQHAMGKDKEV.

This sequence belongs to the protein kinase superfamily. Ser/Thr protein kinase family. WNK subfamily.

It carries out the reaction L-seryl-[protein] + ATP = O-phospho-L-seryl-[protein] + ADP + H(+). It catalyses the reaction L-threonyl-[protein] + ATP = O-phospho-L-threonyl-[protein] + ADP + H(+). The polypeptide is Probable serine/threonine-protein kinase WNK3 (WNK3) (Oryza sativa subsp. japonica (Rice)).